The chain runs to 166 residues: Regulator of ribonuclease activity A (166 aa).

The protein belongs to the RraA family. Homotrimer. Binds to both RNA-binding sites in the C-terminal region of Rne and to RhlB.

It is found in the cytoplasm. In terms of biological role, globally modulates RNA abundance by binding to RNase E (Rne) and regulating its endonucleolytic activity. Can modulate Rne action in a substrate-dependent manner by altering the composition of the degradosome. Modulates RNA-binding and helicase activities of the degradosome. This is Regulator of ribonuclease activity A from Histophilus somni (strain 2336) (Haemophilus somnus).